The following is a 238-amino-acid chain: MKMKITKGGTNVSYRIDNTFLQIKNYNSFNHQINYELLKDFDFVPKLISNDQKEIVWEYVEGNEPVVDLNNIKAITNQIKQLHNSNLNFPKNNLKQRVQYYRQKMVELNSGIEIIDKYANLIDDILDKMDHSTPLHNDLFPFNMIETKNKIYFVDWEYATMGDKHFELAYLIETSNMNSECEKVFLDLYSDYDSYKLLLNKIFVNYIVILWIRTQTSAPYNTTFFEQKIINYVTKLTN.

The protein belongs to the peptidase S49 family.

The polypeptide is Protein LicA homolog (licA) (Mycoplasma capricolum subsp. capricolum (strain California kid / ATCC 27343 / NCTC 10154)).